Here is an 81-residue protein sequence, read N- to C-terminus: Sulfur carrier protein TusA (81 aa).

The Cysteine persulfide intermediate role is filled by Cys-19.

It belongs to the sulfur carrier protein TusA family.

The protein resides in the cytoplasm. Functionally, sulfur carrier protein which probably makes part of a sulfur-relay system. This is Sulfur carrier protein TusA from Shewanella piezotolerans (strain WP3 / JCM 13877).